The primary structure comprises 112 residues: CENP-A recruiting complex protein mis19 (112 aa).

Component of the CENP-A recruiting complex composed of at least mis16, mis19, mis19 and mis20.

The protein localises to the chromosome. Its subcellular location is the centromere. It is found in the kinetochore. Functionally, component of the CENP-A recruiting complex that ensures the integrity of mitotic spindles through maintenance of kinetochore factors mis6/CENP-I and cnp1/CENP-A. Links mis16 and mis18 to recruit CENP-A through interacting with non-sense-mediated mRNA decay (NMD) factors and the SWI/SNF complex. Also links mis18 with the CCAN/mis6/ctf19 complex to promote CENP-A assembly. The protein is CENP-A recruiting complex protein mis19 of Schizosaccharomyces pombe (strain 972 / ATCC 24843) (Fission yeast).